The chain runs to 115 residues: U3-lycotoxin-Ls1g (115 aa).

An N-terminal signal peptide occupies residues 1-20 (MKFVLLFGVFLVTLFSYSSA). Residues 21-44 (EMLDDFDQADEDELLSLIEKEEAR) constitute a propeptide that is removed on maturation. 4 disulfides stabilise this stretch: Cys48–Cys63, Cys55–Cys72, Cys62–Cys87, and Cys74–Cys85.

It belongs to the neurotoxin 19 (CSTX) family. 01 subfamily. As to expression, expressed by the venom gland.

It localises to the secreted. This is U3-lycotoxin-Ls1g from Lycosa singoriensis (Wolf spider).